A 203-amino-acid chain; its full sequence is Undecaprenyl phosphate transporter A (203 aa).

Transmembrane regions (helical) follow at residues 16-36, 48-68, 108-128, 137-157, and 173-193; these read AIFILILLENVLPIVPSEIIL, LSILTLFIIATIASFIGLLIL, YGVWAVFICRFIPVLRVLITI, VVTFTVISLIGTTIWNFGLIL, and LHTYSRIMYVVIIIAVIYFAI.

Belongs to the DedA family.

The protein localises to the cell membrane. In terms of biological role, flippase that catalyzes the transport of undecaprenyl phosphate (UndP) across the cytoplasmic membrane, from the external side to the cytoplasmic side. Is involved in UndP recycling during peptidoglycan synthesis. This Staphylococcus aureus (strain NCTC 8325 / PS 47) protein is Undecaprenyl phosphate transporter A.